The sequence spans 491 residues: Aspartyl/glutamyl-tRNA(Asn/Gln) amidotransferase subunit B (491 aa).

This sequence belongs to the GatB/GatE family. GatB subfamily. As to quaternary structure, heterotrimer of A, B and C subunits.

It carries out the reaction L-glutamyl-tRNA(Gln) + L-glutamine + ATP + H2O = L-glutaminyl-tRNA(Gln) + L-glutamate + ADP + phosphate + H(+). The catalysed reaction is L-aspartyl-tRNA(Asn) + L-glutamine + ATP + H2O = L-asparaginyl-tRNA(Asn) + L-glutamate + ADP + phosphate + 2 H(+). In terms of biological role, allows the formation of correctly charged Asn-tRNA(Asn) or Gln-tRNA(Gln) through the transamidation of misacylated Asp-tRNA(Asn) or Glu-tRNA(Gln) in organisms which lack either or both of asparaginyl-tRNA or glutaminyl-tRNA synthetases. The reaction takes place in the presence of glutamine and ATP through an activated phospho-Asp-tRNA(Asn) or phospho-Glu-tRNA(Gln). In Trichormus variabilis (strain ATCC 29413 / PCC 7937) (Anabaena variabilis), this protein is Aspartyl/glutamyl-tRNA(Asn/Gln) amidotransferase subunit B.